The sequence spans 431 residues: Divergent protein kinase domain 1B (431 aa).

The Cytoplasmic portion of the chain corresponds to 1-30 (MRRLRRLAHLVLFCPFSKRLQGRLPGLRVR). The short motif at 5–6 (RR) is the May mediate ER retention element. The helical transmembrane segment at 31 to 51 (CIFLAWLGVFAGSWLVYVHYS) threads the bilayer. Over 52–431 (SYSERCRGHV…WKKISNTKYS (380 aa)) the chain is Lumenal. Cystine bridges form between cysteine 57–cysteine 94 and cysteine 62–cysteine 117.

This sequence belongs to the DIPK family. Among the many cysteines in the lumenal domain, most are probably involved in disulfide bonds.

The protein resides in the endoplasmic reticulum membrane. This is Divergent protein kinase domain 1B from Homo sapiens (Human).